Reading from the N-terminus, the 251-residue chain is HTH-type transcriptional regulator UlaR (251 aa).

One can recognise an HTH deoR-type domain in the interval 3–58 (EAQRHQILLDMLAQLGFVTVENVIERLGISPATARRDINKLDESGKLKKVRNGAEA). Residues 20–39 (VTVENVIERLGISPATARRD) constitute a DNA-binding region (H-T-H motif).

It localises to the cytoplasm. Functionally, represses ulaG and the ulaABCDEF operon. The sequence is that of HTH-type transcriptional regulator UlaR from Salmonella agona (strain SL483).